The sequence spans 336 residues: Mitochondrial thiamine diphosphate carrier 2 (336 aa).

The next 6 helical transmembrane spans lie at 11–27 (RRALVDSLAGAISGGIS), 88–105 (VPALLMYMPYTAIQFTVL), 127–150 (YLSYVSGALAGCAATIGSYPFDLL), 182–199 (LYSGLSPTLVEIIPYAGL), 230–246 (SVSSFQLFLCGFAAGTF), and 303–322 (GLFPSLVKSAPAGAVTFVAY). Solcar repeat units follow at residues 11-111 (RRAL…LKTF), 124-210 (LSPY…FKRS), and 231-328 (VSSF…ISDW).

The protein belongs to the mitochondrial carrier (TC 2.A.29) family. In terms of tissue distribution, ubiquitous.

The protein localises to the mitochondrion inner membrane. Mitochondrial transporter that mediates uptake of thiamine diphosphate (ThDP) into mitochondria. In Zea mays (Maize), this protein is Mitochondrial thiamine diphosphate carrier 2.